We begin with the raw amino-acid sequence, 476 residues long: ATP synthase subunit beta 2 (476 aa).

Residue 160–167 participates in ATP binding; the sequence is GGAGVGKT.

This sequence belongs to the ATPase alpha/beta chains family. F-type ATPases have 2 components, CF(1) - the catalytic core - and CF(0) - the membrane proton channel. CF(1) has five subunits: alpha(3), beta(3), gamma(1), delta(1), epsilon(1). CF(0) has four main subunits: a(1), b(1), b'(1) and c(9-12).

Its subcellular location is the cell inner membrane. It catalyses the reaction ATP + H2O + 4 H(+)(in) = ADP + phosphate + 5 H(+)(out). Produces ATP from ADP in the presence of a proton gradient across the membrane. The catalytic sites are hosted primarily by the beta subunits. This is ATP synthase subunit beta 2 from Bradyrhizobium sp. (strain BTAi1 / ATCC BAA-1182).